Consider the following 603-residue polypeptide: Pentatricopeptide repeat-containing protein At2g02980, chloroplastic (603 aa).

The transit peptide at 1–38 (MAISSASLISSFSHAETFTKHSKIDTVNTQNPILLISK) directs the protein to the chloroplast. 10 PPR repeats span residues 93 to 127 (DIVI…GILP), 128 to 162 (DNYT…GLDD), 163 to 193 (NVYV…IVEP), 194 to 228 (CVVC…YLKP), 229 to 263 (NEIT…SFCK), 264 to 294 (YVKV…MRYK), 295 to 329 (DTQA…NVQP), 330 to 365 (DEIT…GIVP), 366 to 400 (SIKH…PTPM), and 432 to 466 (HGGD…KAVK). The interval 401 to 476 (LWRILLAACS…VPGCSSIEVN (76 aa)) is type E motif. Residues 477–507 (NVVHEFFSGDGVKSATTKLHRALDEMVKELK) are type E(+) motif. The segment at 508–603 (LSGYVPDTSM…DGKCSCGDFW (96 aa)) is type DYW motif.

The protein belongs to the PPR family. PCMP-H subfamily.

The protein resides in the plastid. It localises to the chloroplast. Its function is as follows. Involved in RNA editing event in chloroplasts. Required for the editing of a single site in ndhD transcript, which is a plastid-encoded subunits of the chloroplast NAD(P)H dehydrogenase (NDH) complex. Not essential for the activity of the NDH complex of the photosynthetic electron transport chain. In Arabidopsis thaliana (Mouse-ear cress), this protein is Pentatricopeptide repeat-containing protein At2g02980, chloroplastic (PCMP-H26).